The chain runs to 387 residues: MKQAVIVDCIRTPMGRSKAGVFRNVRAETLSAELMKGLLLRNPQLDPNTIEDVIWGCVQQTLEQGFNIARNASLLAGIPKTAGAVTVNRLCGSSMEAIHQAARAIMTGMGDTFIIGGVEHMGHVPMNHGVDFHPGLANNVAKASGMMGLTAEMLGKLHGITREQQDAFAVRSHQRAYAATIEGRFAKEIYGIEGHDATGALIKVLQDEVIRPETTMESLAVLRPVFDPVNGTVTAGTSSALSDGASAMLIMEESKARALGLPIRARIRSMAVAGCDAAIMGYGPVPATQKALARAGITVNDLDVIELNEAFAAQSLPCVKDLGLLDVVDEKINLNGGAIALGHPLGCSGARISTTLINLMEHKDATLGLATMCIGLGQGIATVFERV.

Cysteine 91 (acyl-thioester intermediate) is an active-site residue. Residues histidine 343 and cysteine 373 each act as proton acceptor in the active site.

The protein belongs to the thiolase-like superfamily. Thiolase family. As to quaternary structure, heterotetramer of two alpha chains (FadB) and two beta chains (FadA).

The protein resides in the cytoplasm. It carries out the reaction an acyl-CoA + acetyl-CoA = a 3-oxoacyl-CoA + CoA. It participates in lipid metabolism; fatty acid beta-oxidation. Its function is as follows. Catalyzes the final step of fatty acid oxidation in which acetyl-CoA is released and the CoA ester of a fatty acid two carbons shorter is formed. The chain is 3-ketoacyl-CoA thiolase from Shewanella oneidensis (strain ATCC 700550 / JCM 31522 / CIP 106686 / LMG 19005 / NCIMB 14063 / MR-1).